The sequence spans 680 residues: ATPase family AAA domain-containing protein FIGL1 (680 aa).

Disordered stretches follow at residues 214–234 (YGNS…NQDR), 250–275 (FGTK…GAPN), and 288–352 (VRQK…GGKT). Positions 295-308 (TESPSSCLSPQSDK) are enriched in polar residues. A compositionally biased stretch (gly residues) spans 313-323 (RGYGSRSGGLR). Residues 336–346 (TNGNNVGNLTS) are compositionally biased toward polar residues. ATP contacts are provided by residues Ala406 and 446–451 (GTGKTM).

The protein belongs to the AAA ATPase family. It depends on Mg(2+) as a cofactor.

Its subcellular location is the nucleus. It carries out the reaction ATP + H2O = ADP + phosphate + H(+). Involved in DNA double-strand break (DBS) repair via homologous recombination (HR). Limits class II meiotic crossover (CO) formation by regulating the invasion step of meiotic HR. May counteract DMC1 and RAD51-mediated inter-homolog strand invasion to limit CO formation. Functions independently of FANCM. This Arabidopsis thaliana (Mouse-ear cress) protein is ATPase family AAA domain-containing protein FIGL1.